We begin with the raw amino-acid sequence, 204 residues long: 8-oxoguanine DNA glycosylase/AP lyase (204 aa).

Active-site residues include lysine 129 and aspartate 147.

It belongs to the type-2 OGG1 family.

The enzyme catalyses 2'-deoxyribonucleotide-(2'-deoxyribose 5'-phosphate)-2'-deoxyribonucleotide-DNA = a 3'-end 2'-deoxyribonucleotide-(2,3-dehydro-2,3-deoxyribose 5'-phosphate)-DNA + a 5'-end 5'-phospho-2'-deoxyribonucleoside-DNA + H(+). Catalyzes the excision of an oxidatively damaged form of guanine (7,8-dihydro-8-oxoguanine = 8-oxoG) from DNA. Also cleaves the DNA backbone at apurinic/apyrimidinic sites (AP sites). This chain is 8-oxoguanine DNA glycosylase/AP lyase, found in Thermoplasma acidophilum (strain ATCC 25905 / DSM 1728 / JCM 9062 / NBRC 15155 / AMRC-C165).